The chain runs to 214 residues: uncharacterized protein (214 aa).

Residues 39–68 (KLRSKKEVEEKIKEVDRELEEVVNAGVSIN) are a coiled coil. The segment covering 99–114 (EIKVEAPEPDEEKLPD) has biased composition (basic and acidic residues). The disordered stretch occupies residues 99–162 (EIKVEAPEPD…EEVEFDEEDD (64 aa)). The span at 123 to 162 (SDLDMDFEDLGQEIPLDADEQEEEEEEEEVEEVEFDEEDD) shows a compositional bias: acidic residues. The stretch at 138–212 (LDADEQEEEE…IQRLKVLSGG (75 aa)) forms a coiled coil.

This is an uncharacterized protein from Archaeoglobus fulgidus (strain ATCC 49558 / DSM 4304 / JCM 9628 / NBRC 100126 / VC-16).